The following is a 435-amino-acid chain: ATP-dependent Clp protease ATP-binding subunit ClpX 3 (435 aa).

The region spanning 1-53 (MSSDPPAKTQHCSFCGIEQGRDTPLIAGIEGQICEACVRLAEQVVANWGRKRS) is the ClpX-type ZB domain. Zn(2+) contacts are provided by cysteine 12, cysteine 15, cysteine 34, and cysteine 37. 125–132 (PTGTGKTL) contributes to the ATP binding site.

The protein belongs to the ClpX chaperone family. In terms of assembly, component of the ClpX-ClpP complex. Forms a hexameric ring that, in the presence of ATP, binds to fourteen ClpP subunits assembled into a disk-like structure with a central cavity, resembling the structure of eukaryotic proteasomes.

In terms of biological role, ATP-dependent specificity component of the Clp protease. It directs the protease to specific substrates. Can perform chaperone functions in the absence of ClpP. The chain is ATP-dependent Clp protease ATP-binding subunit ClpX 3 from Methylococcus capsulatus (strain ATCC 33009 / NCIMB 11132 / Bath).